The following is an 86-amino-acid chain: Small ribosomal subunit protein uS15c (86 aa).

It belongs to the universal ribosomal protein uS15 family. In terms of assembly, part of the 30S ribosomal subunit.

It is found in the plastid. In Cuscuta gronovii (Common dodder), this protein is Small ribosomal subunit protein uS15c (rps15).